An 804-amino-acid polypeptide reads, in one-letter code: E3 UFM1-protein ligase 1 homolog (804 aa).

At Met1 the chain carries N-acetylmethionine. The disordered stretch occupies residues 397–483 (IHPSSKSSES…VKAQESNNII (87 aa)). Low complexity predominate over residues 400–409 (SSKSSESTES). Over residues 463 to 475 (LDSKAGGKKESVK) the composition is skewed to basic and acidic residues.

It belongs to the UFL1 family.

Its function is as follows. E3 UFM1-protein ligase that mediates ufmylation of target proteins. The chain is E3 UFM1-protein ligase 1 homolog from Arabidopsis thaliana (Mouse-ear cress).